Consider the following 502-residue polypeptide: MQNDGTFDPEASYDAVLVGAGIMSATLAALLHELDPQLRLLLVERLEAPALESSAAVNNAGTGHAANCELNYTPMQPNGRVATDKAVAINAAFERSLEFWGSLLERGRLTSTDFLHRAAHISAVWSPANIAFLRQRFEQLKDIPAFAEMRWTEDRQDLAEWMPLVMEGRDPNQAVAATRIERGTDVDFGALTRAYLLPLQSSGALTVQYGTEVSNLKRLRRPNMTEGDWRVITKGPSGRREVRAPFVFLGAGGGALPLLQRSGIPEGDDFAGFPVSGLWLVCNDADLAEQQRAKVYGKAAVGAPPMSVPHLDTRWMDGRRSLLFGPFAGFSSKFLKQGSLLDLPASVRPTNLLPMLQVGATNIELVRYLINQLRQTPDQRFDALRDFLPTARQDDWSLSVAGQRVQIIKRSKEGGRLQLGTEVVAASDGSLAALLGASPGASTAVTIMLEVLQRCFPERLASADWQARLKALLPSFYSDPKSDPDVLKGMRERSDGLLGLSR.

Belongs to the MQO family. FAD serves as cofactor.

It carries out the reaction (S)-malate + a quinone = a quinol + oxaloacetate. Its pathway is carbohydrate metabolism; tricarboxylic acid cycle; oxaloacetate from (S)-malate (quinone route): step 1/1. This is Probable malate:quinone oxidoreductase from Synechococcus sp. (strain CC9902).